The primary structure comprises 903 residues: Disintegrin and metalloproteinase domain-containing protein 12 (903 aa).

A signal peptide spans 1-31; that stretch reads MAERPARRAPPARALLLALAGALLAPRAARG. The propeptide occupies 32–205; it reads MSLWDQRGTY…SQMRARRHKR (174 aa). 3 N-linked (GlcNAc...) asparagine glycosylation sites follow: asparagine 112, asparagine 147, and asparagine 157. The Cysteine switch signature appears at 175-182; it reads GLCGSQHN. Cysteine 177 lines the Zn(2+) pocket. Asparagine 182 and asparagine 185 each carry an N-linked (GlcNAc...) asparagine glycan. At 206 to 706 the chain is on the extracellular side; that stretch reads ETLKMTKYVE…GPIRQADNQG (501 aa). The 203-residue stretch at 212 to 414 folds into the Peptidase M12B domain; that stretch reads KYVELVIVAD…GMGMCLFNLP (203 aa). 3 disulfide bridges follow: cysteine 323–cysteine 409, cysteine 365–cysteine 393, and cysteine 367–cysteine 376. Position 348 (histidine 348) interacts with Zn(2+). Residue glutamate 349 is part of the active site. Histidine 352 and histidine 358 together coordinate Zn(2+). In terms of domain architecture, Disintegrin spans 422–508; it reads GRKCGNGYVE…HCPANVYLHD (87 aa). The N-linked (GlcNAc...) asparagine glycan is linked to asparagine 450. Cysteine 480 and cysteine 500 are oxidised to a cystine. Asparagine 649 carries an N-linked (GlcNAc...) asparagine glycan. The EGF-like domain occupies 654–686; sequence GVHKCAMQCHGRGVCNNRKNCHCEAHWAPPFCD. Cystine bridges form between cysteine 658–cysteine 668, cysteine 662–cysteine 674, and cysteine 676–cysteine 685. Residues 707–727 form a helical membrane-spanning segment; it reads LTVGILVSILCLLAAGFVVYL. Residues 728–903 lie on the Cytoplasmic side of the membrane; sequence KRKTLMRLLF…PRPSHNAYIK (176 aa). Disordered regions lie at residues 753 to 790 and 819 to 903; these read SRTP…HSLK and HQTP…AYIK. Short sequence motifs (SH3-binding; class II) lie at residues 824-830 and 846-852; these read APSGPAR and KPSPPQK. Short sequence motifs (SH3-binding; class I) lie at residues 830 to 837, 852 to 858, and 881 to 887; these read RPLPASPA, KPLPADP, and RPAPIRP. Pro residues predominate over residues 847–856; it reads PSPPQKPLPA. Tyrosine 901 is modified (phosphotyrosine; by SRC).

As to quaternary structure, interacts with alpha-actinin-2 and with syndecans. Interacts with SH3PXD2A. Interacts with FST3. Interacts with RACK1; the interaction is required for PKC-dependent translocation of ADAM12 to the cell membrane. Requires Zn(2+) as cofactor. Post-translationally, the precursor is cleaved by a furin endopeptidase. Expressed during early developing mesenchymal cells that give rise to skeletal muscle, bones and visceral organs. Not expressed in adult normal muscle but expressed in regenerating muscle.

Its subcellular location is the membrane. Functionally, involved in skeletal muscle regeneration, specifically at the onset of cell fusion. Also involved in macrophage-derived giant cells (MGC) and osteoclast formation from mononuclear precursors. This Mus musculus (Mouse) protein is Disintegrin and metalloproteinase domain-containing protein 12 (Adam12).